The sequence spans 646 residues: Stage V sporulation protein D (646 aa).

Ser294 serves as the catalytic Acyl-ester intermediate. Residues 580–638 (DTKTIEVPNVVGMSVSDLESLLVNLNVDASGKGSKIVKQSPAAGTKVKEGSKIRVYLTE) form the PASTA domain.

The protein belongs to the transpeptidase family.

It localises to the cell membrane. The enzyme catalyses Preferential cleavage: (Ac)2-L-Lys-D-Ala-|-D-Ala. Also transpeptidation of peptidyl-alanyl moieties that are N-acyl substituents of D-alanine.. It functions in the pathway cell wall biogenesis; peptidoglycan biosynthesis. Functionally, penicillin-binding protein with an unknown catalytic activity. May have a specialized role in the morphogenesis of spore cortex, which is a modified form of peptidoglycan. Spore cortex formation is determined primarily by the mother cell. The protein is Stage V sporulation protein D (spoVD) of Bacillus subtilis (strain 168).